Reading from the N-terminus, the 444-residue chain is Structure-specific endonuclease subunit SLX1 (444 aa).

The region spanning 23–105 (AFSCCYLLRS…QNTKVSRHAD (83 aa)) is the GIY-YIG domain. Residues 240 to 295 (CGVCKQRLILQHDIIAVCSHSSCHCAAHLSCLSSHFLKDKDSDSELVPREGTCPTC) form an SLX1-type zinc finger. The tract at residues 324–354 (RRQRAGTPKGQGLKSVRGRGHSEDENESDAL) is disordered.

This sequence belongs to the SLX1 family. As to quaternary structure, forms a heterodimer with SLX4. Requires a divalent metal cation as cofactor.

Its subcellular location is the nucleus. Catalytic subunit of the SLX1-SLX4 structure-specific endonuclease that resolves DNA secondary structures generated during DNA repair and recombination. Has endonuclease activity towards branched DNA substrates, introducing single-strand cuts in duplex DNA close to junctions with ss-DNA. In Paracoccidioides lutzii (strain ATCC MYA-826 / Pb01) (Paracoccidioides brasiliensis), this protein is Structure-specific endonuclease subunit SLX1.